A 365-amino-acid chain; its full sequence is uncharacterized protein (365 aa).

Disordered regions lie at residues Gln218 to Ala262 and Pro315 to Cys342. Basic and acidic residues-rich tracts occupy residues Pro239–Glu257 and Met331–Pro341.

This is an uncharacterized protein from Mus musculus (Mouse).